The following is a 274-amino-acid chain: Protein RecA (274 aa).

43–50 (GPESSGKT) contacts ATP.

Belongs to the RecA family.

It localises to the cytoplasm. Functionally, can catalyze the hydrolysis of ATP in the presence of single-stranded DNA, the ATP-dependent uptake of single-stranded DNA by duplex DNA, and the ATP-dependent hybridization of homologous single-stranded DNAs. It interacts with LexA causing its activation and leading to its autocatalytic cleavage. The chain is Protein RecA from Neisseria mucosa.